We begin with the raw amino-acid sequence, 142 residues long: Large ribosomal subunit protein uL13 (142 aa).

The protein belongs to the universal ribosomal protein uL13 family. In terms of assembly, part of the 50S ribosomal subunit.

Its function is as follows. This protein is one of the early assembly proteins of the 50S ribosomal subunit, although it is not seen to bind rRNA by itself. It is important during the early stages of 50S assembly. The chain is Large ribosomal subunit protein uL13 from Treponema pallidum (strain Nichols).